The chain runs to 409 residues: Divalent metal cation transporter MntH (409 aa).

A run of 11 helical transmembrane segments spans residues 19–39 (LSLM…GNFA), 46–66 (ASFG…AMLI), 98–118 (WVQA…GAAI), 122–142 (LLLG…TFLI), 155–175 (LVIG…LVFS), 196–216 (AVFL…IYLH), 241–261 (IAMT…AAAF), 290–310 (IFGL…TLAG), 320–340 (FYIP…IVIL), 348–368 (ILVM…VPLL), and 388–408 (ILGK…LVSL).

This sequence belongs to the NRAMP family.

Its subcellular location is the cell inner membrane. H(+)-stimulated, divalent metal cation uptake system. This chain is Divalent metal cation transporter MntH, found in Yersinia enterocolitica serotype O:8 / biotype 1B (strain NCTC 13174 / 8081).